Consider the following 193-residue polypeptide: 7-methyl-GTP pyrophosphatase (193 aa).

Asp-70 acts as the Proton acceptor in catalysis.

Belongs to the Maf family. YceF subfamily. A divalent metal cation serves as cofactor.

It is found in the cytoplasm. It catalyses the reaction N(7)-methyl-GTP + H2O = N(7)-methyl-GMP + diphosphate + H(+). Its function is as follows. Nucleoside triphosphate pyrophosphatase that hydrolyzes 7-methyl-GTP (m(7)GTP). May have a dual role in cell division arrest and in preventing the incorporation of modified nucleotides into cellular nucleic acids. This is 7-methyl-GTP pyrophosphatase from Vibrio parahaemolyticus serotype O3:K6 (strain RIMD 2210633).